The sequence spans 205 residues: Putative C-type lectin protein FPV001/FPV260 (205 aa).

Residues 84 to 187 (CPRDWISHNG…CSVRRYLVCK (104 aa)) form the C-type lectin domain.

In Fowlpox virus (strain NVSL) (FPV), this protein is Putative C-type lectin protein FPV001/FPV260.